The following is a 206-amino-acid chain: Sec-independent protein translocase protein TatB (206 aa).

Residues 1 to 21 (MFDIGWTELLVIAVVLIVVVG) form a helical membrane-spanning segment. A disordered region spans residues 104–206 (ENKTEVPSAA…VQTKKKKDEA (103 aa)). The span at 110–124 (PSAAMSAPTPSMSLP) shows a compositional bias: low complexity. Pro residues predominate over residues 125 to 138 (ETPPVVPTPAPAPE). Low complexity-rich tracts occupy residues 139–151 (PAAV…AAKP) and 187–196 (ARKPAAPKTP).

Belongs to the TatB family. As to quaternary structure, the Tat system comprises two distinct complexes: a TatABC complex, containing multiple copies of TatA, TatB and TatC subunits, and a separate TatA complex, containing only TatA subunits. Substrates initially bind to the TatABC complex, which probably triggers association of the separate TatA complex to form the active translocon.

Its subcellular location is the cell inner membrane. Its function is as follows. Part of the twin-arginine translocation (Tat) system that transports large folded proteins containing a characteristic twin-arginine motif in their signal peptide across membranes. Together with TatC, TatB is part of a receptor directly interacting with Tat signal peptides. TatB may form an oligomeric binding site that transiently accommodates folded Tat precursor proteins before their translocation. The polypeptide is Sec-independent protein translocase protein TatB (Rhizobium etli (strain ATCC 51251 / DSM 11541 / JCM 21823 / NBRC 15573 / CFN 42)).